The primary structure comprises 99 residues: Cytochrome c oxidase subunit 4 isoform 1, mitochondrial (99 aa).

Over 1–73 (SVVKSEDFTL…SFAEMNRRSN (73 aa)) the chain is Mitochondrial matrix. K4 carries the post-translational modification N6-acetyllysine; alternate. Residue K4 is modified to N6-succinyllysine; alternate. N6-acetyllysine is present on K28. S31 and S33 each carry phosphoserine. K35 is subject to N6-acetyllysine; alternate. An N6-succinyllysine; alternate modification is found at K35. Position 42 is an N6-acetyllysine (K42). The chain crosses the membrane as a helical span at residues 74-99 (EWKTVVGTAMFFIGITALVIMWEKLY).

It belongs to the cytochrome c oxidase IV family. In terms of assembly, component of the cytochrome c oxidase (complex IV, CIV), a multisubunit enzyme composed of 14 subunits. The complex is composed of a catalytic core of 3 subunits MT-CO1, MT-CO2 and MT-CO3, encoded in the mitochondrial DNA, and 11 supernumerary subunits COX4I, COX5A, COX5B, COX6A, COX6B, COX6C, COX7A, COX7B, COX7C, COX8 and NDUFA4, which are encoded in the nuclear genome. The complex exists as a monomer or a dimer and forms supercomplexes (SCs) in the inner mitochondrial membrane with NADH-ubiquinone oxidoreductase (complex I, CI) and ubiquinol-cytochrome c oxidoreductase (cytochrome b-c1 complex, complex III, CIII), resulting in different assemblies (supercomplex SCI(1)III(2)IV(1) and megacomplex MCI(2)III(2)IV(2)). Interacts with PHB2; the interaction decreases in absence of SPHK2. Interacts with AFG1L. Interacts with ABCB7; this interaction allows the regulation of cellular iron homeostasis and cellular reactive oxygen species (ROS) levels in cardiomyocytes. Interacts with FLVCR2; this interaction occurs in the absence of heme and is disrupted upon heme binding. Interacts with IRGC.

It localises to the mitochondrion inner membrane. It functions in the pathway energy metabolism; oxidative phosphorylation. Component of the cytochrome c oxidase, the last enzyme in the mitochondrial electron transport chain which drives oxidative phosphorylation. The respiratory chain contains 3 multisubunit complexes succinate dehydrogenase (complex II, CII), ubiquinol-cytochrome c oxidoreductase (cytochrome b-c1 complex, complex III, CIII) and cytochrome c oxidase (complex IV, CIV), that cooperate to transfer electrons derived from NADH and succinate to molecular oxygen, creating an electrochemical gradient over the inner membrane that drives transmembrane transport and the ATP synthase. Cytochrome c oxidase is the component of the respiratory chain that catalyzes the reduction of oxygen to water. Electrons originating from reduced cytochrome c in the intermembrane space (IMS) are transferred via the dinuclear copper A center (CU(A)) of subunit 2 and heme A of subunit 1 to the active site in subunit 1, a binuclear center (BNC) formed by heme A3 and copper B (CU(B)). The BNC reduces molecular oxygen to 2 water molecules using 4 electrons from cytochrome c in the IMS and 4 protons from the mitochondrial matrix. In Mandrillus sphinx (Mandrill), this protein is Cytochrome c oxidase subunit 4 isoform 1, mitochondrial (COX4I1).